The chain runs to 176 residues: Nucleoside triphosphate/diphosphate phosphatase (176 aa).

The active-site Proton donor is the R23. 6 residues coordinate Mg(2+): N87, D103, D105, D107, D120, and E123.

It belongs to the Ntdp family. Requires Mg(2+) as cofactor.

It carries out the reaction a ribonucleoside 5'-triphosphate + H2O = a ribonucleoside 5'-diphosphate + phosphate + H(+). The enzyme catalyses a ribonucleoside 5'-diphosphate + H2O = a ribonucleoside 5'-phosphate + phosphate + H(+). Its function is as follows. Has nucleoside phosphatase activity towards nucleoside triphosphates and nucleoside diphosphates. The protein is Nucleoside triphosphate/diphosphate phosphatase (yjjG) of Lactococcus lactis subsp. lactis (strain IL1403) (Streptococcus lactis).